Here is a 284-residue protein sequence, read N- to C-terminus: MASHDSYTGRLPGAFMNPGTSSFTEFLASYNPDLLPGRHMTALAGGMPGNVEAPHATTIVAVTFPGGVVMAGDRRATAGNMIAQRDVEKVFRADEFSAVAIAGTAGIGMEIVRLFQVEIEHYEKMEGRTLSLEGKANRLATMIRANLGMAMQGLVAVPLFAGYDTEREVGRIFSYDPAGGRYEEHEHHSIGSGSVFARGALKKLWRPDLSAQDAALVCVQALYDAADDDSATGGPDLIRKIYPVVATVTADGFRRLPEEEVGELARIVVDGRHDSPGGPTAPLR.

A propeptide spans 1–56 (MASHDSYTGRLPGAFMNPGTSSFTEFLASYNPDLLPGRHMTALAGGMPGNVEAPHA) (removed in mature form; by autocatalysis). Catalysis depends on threonine 57, which acts as the Nucleophile.

Belongs to the peptidase T1B family. In terms of assembly, the 20S proteasome core is composed of 14 alpha and 14 beta subunits that assemble into four stacked heptameric rings, resulting in a barrel-shaped structure. The two inner rings, each composed of seven catalytic beta subunits, are sandwiched by two outer rings, each composed of seven alpha subunits. The catalytic chamber with the active sites is on the inside of the barrel. Has a gated structure, the ends of the cylinder being occluded by the N-termini of the alpha-subunits. Is capped by the proteasome-associated ATPase, ARC.

The protein resides in the cytoplasm. The catalysed reaction is Cleavage of peptide bonds with very broad specificity.. Its pathway is protein degradation; proteasomal Pup-dependent pathway. The formation of the proteasomal ATPase ARC-20S proteasome complex, likely via the docking of the C-termini of ARC into the intersubunit pockets in the alpha-rings, may trigger opening of the gate for substrate entry. Interconversion between the open-gate and close-gate conformations leads to a dynamic regulation of the 20S proteasome proteolysis activity. Its function is as follows. Component of the proteasome core, a large protease complex with broad specificity involved in protein degradation. The chain is Proteasome subunit beta 1 from Thermomonospora curvata (strain ATCC 19995 / DSM 43183 / JCM 3096 / KCTC 9072 / NBRC 15933 / NCIMB 10081 / Henssen B9).